The following is a 364-amino-acid chain: Peptide chain release factor 2 (364 aa).

Gln-251 bears the N5-methylglutamine mark.

Belongs to the prokaryotic/mitochondrial release factor family. Methylated by PrmC. Methylation increases the termination efficiency of RF2.

It is found in the cytoplasm. Its function is as follows. Peptide chain release factor 2 directs the termination of translation in response to the peptide chain termination codons UGA and UAA. This Sulfurovum sp. (strain NBC37-1) protein is Peptide chain release factor 2.